Consider the following 1406-residue polypeptide: DNA topoisomerase 2 (1406 aa).

ATP-binding positions include Asn-69, Asn-98, 126-128 (SSN), and 139-146 (GRNGYGAK). Residues 332 to 334 (KKK) are interaction with DNA. 363–365 (QTK) contributes to the ATP binding site. Residues 441 to 555 (CTLILTEGDS…GLLDIPGFLI (115 aa)) form the Toprim domain. Positions 447, 524, and 526 each coordinate Mg(2+). In terms of domain architecture, Topo IIA-type catalytic spans 690–1159 (IPSVLDGFKP…SAKDLWNNDL (470 aa)). Tyr-780 acts as the O-(5'-phospho-DNA)-tyrosine intermediate in catalysis. The interval 963–972 (KLISPISLQN) is interaction with DNA. Residues 1079 to 1089 (EDEDEDLEESE) show a composition bias toward acidic residues. Disordered stretches follow at residues 1079–1106 (EDED…VNGP), 1183–1215 (KTKG…KKIK), 1230–1287 (KIKA…DESG), and 1303–1406 (DEDA…FNDE). The span at 1090–1100 (EATRKKDKDDE) shows a compositional bias: basic and acidic residues. Basic residues predominate over residues 1204 to 1214 (KKKPARRIKKI). A compositionally biased stretch (polar residues) spans 1261-1274 (DVTSNASTPSTTIF). The segment covering 1326 to 1336 (AKKKAPPKRKA) has biased composition (basic residues). Composition is skewed to acidic residues over residues 1341–1359 (SSED…DEEV) and 1381–1406 (EISD…FNDE).

The protein belongs to the type II topoisomerase family. As to quaternary structure, homodimer. It depends on Mg(2+) as a cofactor. Requires Mn(2+) as cofactor. Ca(2+) serves as cofactor.

Its subcellular location is the nucleus. It catalyses the reaction ATP-dependent breakage, passage and rejoining of double-stranded DNA.. Its function is as follows. Control of topological states of DNA by transient breakage and subsequent rejoining of DNA strands. Topoisomerase II makes double-strand breaks. The chain is DNA topoisomerase 2 (TOP2) from Candida glabrata (strain ATCC 2001 / BCRC 20586 / JCM 3761 / NBRC 0622 / NRRL Y-65 / CBS 138) (Yeast).